Reading from the N-terminus, the 178-residue chain is Inner membrane-spanning protein YciB (178 aa).

A run of 5 helical transmembrane segments spans residues 10 to 30 (IVLFFGSYKLYGIYVATAVLM), 47 to 67 (LQTMHKVTLALILSFGALTLA), 76 to 96 (WKPTVLYGAMSVALALTLWAL), 121 to 141 (WAWIAYCAFMSAINAYVVLHW), and 151 to 171 (LWGYVFPLVFLIGQGLYIAPH).

It belongs to the YciB family.

The protein localises to the cell inner membrane. Plays a role in cell envelope biogenesis, maintenance of cell envelope integrity and membrane homeostasis. In Verminephrobacter eiseniae (strain EF01-2), this protein is Inner membrane-spanning protein YciB.